The sequence spans 488 residues: Glutamyl-tRNA(Gln) amidotransferase subunit A (488 aa).

Residues K77 and S152 each act as charge relay system in the active site. S176 acts as the Acyl-ester intermediate in catalysis.

The protein belongs to the amidase family. GatA subfamily. As to quaternary structure, heterotrimer of A, B and C subunits.

It catalyses the reaction L-glutamyl-tRNA(Gln) + L-glutamine + ATP + H2O = L-glutaminyl-tRNA(Gln) + L-glutamate + ADP + phosphate + H(+). Functionally, allows the formation of correctly charged Gln-tRNA(Gln) through the transamidation of misacylated Glu-tRNA(Gln) in organisms which lack glutaminyl-tRNA synthetase. The reaction takes place in the presence of glutamine and ATP through an activated gamma-phospho-Glu-tRNA(Gln). The polypeptide is Glutamyl-tRNA(Gln) amidotransferase subunit A (Streptococcus equi subsp. zooepidemicus (strain MGCS10565)).